The sequence spans 197 residues: Peptide deformylase (197 aa).

Residues Cys106 and His148 each coordinate Fe cation. Glu149 is an active-site residue. Position 152 (His152) interacts with Fe cation.

It belongs to the polypeptide deformylase family. Fe(2+) is required as a cofactor.

The catalysed reaction is N-terminal N-formyl-L-methionyl-[peptide] + H2O = N-terminal L-methionyl-[peptide] + formate. Its function is as follows. Removes the formyl group from the N-terminal Met of newly synthesized proteins. Requires at least a dipeptide for an efficient rate of reaction. N-terminal L-methionine is a prerequisite for activity but the enzyme has broad specificity at other positions. This is Peptide deformylase from Mycolicibacterium smegmatis (strain ATCC 700084 / mc(2)155) (Mycobacterium smegmatis).